The sequence spans 240 residues: Inhibitor of growth protein 5 (240 aa).

The tract at residues 115 to 165 (MDGSDFESTGARSLKKGRSQKEKRSSRGRGRRTSEEDTPKKKKHKSGSEFT) is disordered. S118 carries the phosphoserine modification. Omega-N-methylarginine is present on R126. Residues 186–235 (PTYCLCHQVSYGEMIGCDNPDCPIEWFHFACVDLTTKPKGKWFCPRCVQE) form a PHD-type zinc finger. C189, C191, C202, C207, H213, C216, C229, and C232 together coordinate Zn(2+).

This sequence belongs to the ING family. In terms of assembly, component of the HBO1 complex composed of KAT7/HBO1, MEAF6, ING5, and one scaffold subunit: complexes containing BRPF scaffold (BRPF1, BRD1/BRPF2 or BRPF3) direct KAT7/HBO1 specificity towards H3K14ac, while complexes containing JADE scaffold (JADE1, JADE2 and JADE3) mediate acetylation of histone H4. Component of the MOZ/MORF complex composed at least of ING5, KAT6A, KAT6B, MEAF6 and one of BRPF1, BRD1/BRPF2 and BRPF3. Interacts with H3K4me3 and to a lesser extent with H3K4me2. Interacts with EP300 and p53/TP53. Interacts with INCA1.

It is found in the nucleus. The protein localises to the chromosome. In terms of biological role, component of the HBO1 complex, which specifically mediates acetylation of histone H3 at 'Lys-14' (H3K14ac) and, to a lower extent, acetylation of histone H4. Component of the MOZ/MORF complex which has a histone H3 acetyltransferase activity. Through chromatin acetylation it may regulate DNA replication and may function as a transcriptional coactivator. Inhibits cell growth, induces a delay in S-phase progression and enhances Fas-induced apoptosis in an INCA1-dependent manner. This Mus musculus (Mouse) protein is Inhibitor of growth protein 5 (Ing5).